The following is a 292-amino-acid chain: ATP synthase gamma chain (292 aa).

The protein belongs to the ATPase gamma chain family. As to quaternary structure, F-type ATPases have 2 components, CF(1) - the catalytic core - and CF(0) - the membrane proton channel. CF(1) has five subunits: alpha(3), beta(3), gamma(1), delta(1), epsilon(1). CF(0) has three main subunits: a, b and c.

The protein resides in the cell inner membrane. In terms of biological role, produces ATP from ADP in the presence of a proton gradient across the membrane. The gamma chain is believed to be important in regulating ATPase activity and the flow of protons through the CF(0) complex. The protein is ATP synthase gamma chain of Syntrophobacter fumaroxidans (strain DSM 10017 / MPOB).